Consider the following 120-residue polypeptide: Cytochrome c6 (120 aa).

An N-terminal signal peptide occupies residues 1 to 35 (MFKLFNQASRIFFGIALPCLIFLGGIFSLGNTALA). Heme c contacts are provided by C49, C52, H53, and M93.

The protein belongs to the cytochrome c family. PetJ subfamily. As to quaternary structure, monomer. Post-translationally, binds 1 heme c group covalently per subunit.

The protein resides in the cellular thylakoid lumen. In terms of biological role, functions as an electron carrier between membrane-bound cytochrome b6-f and photosystem I in oxygenic photosynthesis. This Synechocystis sp. (strain ATCC 27184 / PCC 6803 / Kazusa) protein is Cytochrome c6 (petJ).